The chain runs to 285 residues: Small ribosomal subunit biogenesis GTPase RsgA (285 aa).

Positions 61–215 constitute a CP-type G domain; that stretch reads KNQLIRPKVA…IIDSPGFSSF (155 aa). GTP-binding positions include 110–113 and 159–167; these read TKID and GQTGVGKTS. Residues cysteine 239, cysteine 244, histidine 246, and cysteine 254 each coordinate Zn(2+).

It belongs to the TRAFAC class YlqF/YawG GTPase family. RsgA subfamily. Monomer. Associates with 30S ribosomal subunit, binds 16S rRNA. The cofactor is Zn(2+).

The protein resides in the cytoplasm. One of several proteins that assist in the late maturation steps of the functional core of the 30S ribosomal subunit. Helps release RbfA from mature subunits. May play a role in the assembly of ribosomal proteins into the subunit. Circularly permuted GTPase that catalyzes slow GTP hydrolysis, GTPase activity is stimulated by the 30S ribosomal subunit. The sequence is that of Small ribosomal subunit biogenesis GTPase RsgA from Mesomycoplasma hyopneumoniae (strain J / ATCC 25934 / NCTC 10110) (Mycoplasma hyopneumoniae).